We begin with the raw amino-acid sequence, 527 residues long: Catalase (527 aa).

Over residues 1–22 (MADNRDPASDQMKHWKEQRAAQ) the composition is skewed to basic and acidic residues. Residues 1–32 (MADNRDPASDQMKHWKEQRAAQKPDILTTGSG) are disordered. Alanine 2 is modified (N-acetylalanine). Serine 9 bears the Phosphoserine mark. Lysine 13 bears the N6-succinyllysine mark. Catalysis depends on residues histidine 75 and asparagine 148. 4 residues coordinate NADP(+): histidine 194, serine 201, arginine 203, and asparagine 213. An N6-succinyllysine modification is found at lysine 221. N6-acetyllysine is present on lysine 233. Residues lysine 237, tryptophan 303, and histidine 305 each contribute to the NADP(+) site. Tyrosine 358 is a heme binding site. Serine 417 and serine 434 each carry phosphoserine. Residue lysine 480 is modified to N6-acetyllysine; alternate. Lysine 480 is modified (N6-succinyllysine; alternate). Lysine 499 is subject to N6-acetyllysine. A Phosphothreonine modification is found at threonine 511. Position 517 is a phosphoserine (serine 517). The Microbody targeting signal; atypical signature appears at 524-527 (KANL).

The protein belongs to the catalase family. As to quaternary structure, homotetramer. Interacts (via microbody targeting signal) with PEX5, monomeric form interacts with PEX5, leading to its translocation into peroxisomes. Requires heme as cofactor. The cofactor is NADP(+).

The protein localises to the peroxisome matrix. The catalysed reaction is 2 H2O2 = O2 + 2 H2O. Functionally, catalyzes the degradation of hydrogen peroxide (H(2)O(2)) generated by peroxisomal oxidases to water and oxygen, thereby protecting cells from the toxic effects of hydrogen peroxide. Promotes growth of cells including T-cells, B-cells, myeloid leukemia cells, melanoma cells, mastocytoma cells and normal and transformed fibroblast cells. The chain is Catalase (CAT) from Sus scrofa (Pig).